Reading from the N-terminus, the 687-residue chain is Protein SDA1 homolog (687 aa).

3 disordered regions span residues 517 to 549 (SSDE…SQMR), 561 to 587 (MKQL…EPQG), and 615 to 687 (TVIA…KSKI). Positions 520–537 (EEQEDEDPSGENQEGEED) are enriched in acidic residues. Over residues 644 to 666 (EKRRKKNFMMMRHNKLVRGKTKR) the composition is skewed to basic residues. A compositionally biased stretch (basic and acidic residues) spans 667-680 (SFRDKQIALRDSLL).

Belongs to the SDA1 family.

The protein resides in the nucleus. It is found in the nucleolus. In terms of biological role, required for 60S pre-ribosomal subunits export to the cytoplasm. This is Protein SDA1 homolog (sdad1) from Nematostella vectensis (Starlet sea anemone).